Here is a 658-residue protein sequence, read N- to C-terminus: MGTEDYTFPQGAEELHRRHHTVEAPQPQPFLKSLQYSVKETLFPDDPFRQFKNQNASRKFVLGLKYFLPIFEWAPRYNLKFFKSDLIAGITIASLAIPQGISYAKLANLPPILGLYSSFVPPLVYAVLGSSRDLAVGTVAVASLLTGAMLSKEVDAEKDPKLYLHLAFTATFFAGVLEASLGIFRLGFIVDFLSHATIVGFMGGAATVVSLQQLKGIFGLKHFTDSTDVISVMRSVFSQTHEWRWESGVLGCGFLFFLLSTRYFSIKKPKFFWVAAMAPLTSVILGSLLVYFTHAERHGVQVIGDLKKGLNPLSGSDLIFTSPYMSTAVKTGLITGIIALAEGVAVGRSFAMFKNYNIDGNKEMIAFGMMNIVGSFTSCYLTTGPFSRSAVNYNAGCKTAMSNIVMAIAVMFTLLFLTPLFHYTPLVVLSAIIISAMLGLIDYQAAIHLWKVDKFDFLVCMSAYVGVVFGSVEIGLVVAVAISIARLLLFVSRPKTAVKGNIPNSMIYRNTEQYPSSRTVPGILILEIDAPIYFANASYLRERIIRWIDEEEERVKQSGESSLQYIILDMSAVGNIDTSGISMMVEIKKVIDRRALKLVLSNPKGEVVKKLTRSKFIGDHLGKEWMFLTVGEAVEACSYMLHTFKTEPASKNEPWNNV.

Over 1-85 the chain is Cytoplasmic; the sequence is MGTEDYTFPQ…RYNLKFFKSD (85 aa). Residues 86–106 form a helical membrane-spanning segment; that stretch reads LIAGITIASLAIPQGISYAKL. Residues 107–108 lie on the Extracellular side of the membrane; sequence AN. A helical transmembrane segment spans residues 109-129; sequence LPPILGLYSSFVPPLVYAVLG. At 130 to 133 the chain is on the cytoplasmic side; that stretch reads SSRD. A helical transmembrane segment spans residues 134-154; sequence LAVGTVAVASLLTGAMLSKEV. The Extracellular portion of the chain corresponds to 155-163; the sequence is DAEKDPKLY. Residues 164-184 traverse the membrane as a helical segment; that stretch reads LHLAFTATFFAGVLEASLGIF. Residue arginine 185 is a topological domain, cytoplasmic. Residues 186-206 traverse the membrane as a helical segment; it reads LGFIVDFLSHATIVGFMGGAA. Topologically, residues 207–245 are extracellular; sequence TVVSLQQLKGIFGLKHFTDSTDVISVMRSVFSQTHEWRW. A helical membrane pass occupies residues 246-266; the sequence is ESGVLGCGFLFFLLSTRYFSI. Residues 267 to 271 lie on the Cytoplasmic side of the membrane; that stretch reads KKPKF. Residues 272–292 form a helical membrane-spanning segment; it reads FWVAAMAPLTSVILGSLLVYF. Topologically, residues 293–332 are extracellular; the sequence is THAERHGVQVIGDLKKGLNPLSGSDLIFTSPYMSTAVKTG. The chain crosses the membrane as a helical span at residues 333 to 353; the sequence is LITGIIALAEGVAVGRSFAMF. At 354-363 the chain is on the cytoplasmic side; the sequence is KNYNIDGNKE. The helical transmembrane segment at 364–384 threads the bilayer; sequence MIAFGMMNIVGSFTSCYLTTG. Residues 385-398 lie on the Extracellular side of the membrane; it reads PFSRSAVNYNAGCK. The chain crosses the membrane as a helical span at residues 399–419; sequence TAMSNIVMAIAVMFTLLFLTP. Over 420–425 the chain is Cytoplasmic; that stretch reads LFHYTP. A helical transmembrane segment spans residues 426–446; sequence LVVLSAIIISAMLGLIDYQAA. Residues 447 to 464 are Extracellular-facing; sequence IHLWKVDKFDFLVCMSAY. The helical transmembrane segment at 465–485 threads the bilayer; the sequence is VGVVFGSVEIGLVVAVAISIA. Over 486–658 the chain is Cytoplasmic; the sequence is RLLLFVSRPK…ASKNEPWNNV (173 aa). The STAS domain occupies 513 to 637; the sequence is QYPSSRTVPG…LTVGEAVEAC (125 aa).

The protein belongs to the SLC26A/SulP transporter (TC 2.A.53) family. As to expression, expressed only in leaves.

The protein localises to the membrane. H(+)/sulfate cotransporter that may play a role in the regulation of sulfate assimilation. The chain is Sulfate transporter 3.1 (SULTR3;1) from Arabidopsis thaliana (Mouse-ear cress).